Reading from the N-terminus, the 473-residue chain is LETM1 domain-containing protein mdm28, mitochondrial (473 aa).

The transit peptide at Met1 to Tyr73 directs the protein to the mitochondrion. Residues Ser74 to Arg161 are Mitochondrial intermembrane-facing. Residues Leu162–Val182 form a helical membrane-spanning segment. Topologically, residues Lys183 to Lys473 are mitochondrial matrix. One can recognise a Letm1 RBD domain in the interval Gln205–Asp398. The interval Glu430–Lys473 is disordered. The segment covering Glu434–Ala452 has biased composition (basic and acidic residues). Residues Ser462–Lys473 show a composition bias toward polar residues.

It is found in the mitochondrion inner membrane. Functionally, involved in mitochondrial potassium homeostasis through the mitochondrial K(+)/H(+) exchange regulation. This chain is LETM1 domain-containing protein mdm28, mitochondrial (mdm28), found in Schizosaccharomyces pombe (strain 972 / ATCC 24843) (Fission yeast).